We begin with the raw amino-acid sequence, 638 residues long: ATP-dependent rRNA helicase spb4 (638 aa).

The short motif at 14-42 is the Q motif element; that stretch reads WDGVSPSLSEWVLEAVSSMGFTRMTPVQA. In terms of domain architecture, Helicase ATP-binding spans 45–249; sequence IPLFMAHKDV…RVGLRNPVKV (205 aa). 58–65 contacts ATP; that stretch reads AVTGSGKT. The DEAD box motif lies at 197–200; that stretch reads DEAD. In terms of domain architecture, Helicase C-terminal spans 283 to 437; it reads ALKHILHSVD…PISFSESEAT (155 aa). Basic and acidic residues-rich tracts occupy residues 534 to 554 and 577 to 615; these read LLQESKEGDGTQESSNKRKAT and QRRQEKNKWEKMTEEERQKIRETEQMVESIRVKNEEERR. Residues 534–638 are disordered; the sequence is LLQESKEGDG…KDEEEFEGFD (105 aa). Residues 566–619 are a coiled coil; that stretch reads RNKKQKRREQKQRRQEKNKWEKMTEEERQKIRETEQMVESIRVKNEEERRLRRA.

This sequence belongs to the DEAD box helicase family. DDX55/SPB4 subfamily. As to quaternary structure, component of pre-60S ribosomal complexes.

It is found in the nucleus. Its subcellular location is the nucleolus. The catalysed reaction is ATP + H2O = ADP + phosphate + H(+). In terms of biological role, ATP-binding RNA helicase involved in the biogenesis of 60S ribosomal subunits. Binds 90S pre-ribosomal particles and dissociates from pre-60S ribosomal particles after processing of 27SB pre-rRNA. Required for the normal formation of 18S rRNA through the processing of pre-rRNAs at sites A0, A1 and A2, and the normal formation of 25S and 5.8S rRNAs through the processing of pre-rRNAs at sites C1 and C2. In Aspergillus oryzae (strain ATCC 42149 / RIB 40) (Yellow koji mold), this protein is ATP-dependent rRNA helicase spb4.